A 93-amino-acid polypeptide reads, in one-letter code: Bombyxin B-11 (93 aa).

Positions 1 to 22 (MMKTAVMFILVVVISLTYSSEE) are cleaved as a signal peptide. Cystine bridges form between cysteine 30–cysteine 75, cysteine 42–cysteine 92, and cysteine 74–cysteine 79. Residues 49-64 (GGAQYAPYWQETYLRS) constitute a propeptide, bombyxin B-11 C peptide.

It belongs to the insulin family. In terms of assembly, heterodimer of a B chain and an A chain linked by two disulfide bonds.

It is found in the secreted. Brain peptide responsible for activation of prothoracic glands to produce ecdysone in insects. This chain is Bombyxin B-11 (BBXB11), found in Bombyx mori (Silk moth).